A 493-amino-acid polypeptide reads, in one-letter code: Chitobiosyldiphosphodolichol beta-mannosyltransferase (493 aa).

The Lumenal portion of the chain corresponds to 1 to 71; sequence MNRVAVVVLG…PISMSNSFKK (71 aa). The chain crosses the membrane as a helical span at residues 72–92; the sequence is IPLISIFMWPLLAICKVLFQI. Over 93 to 109 the chain is Cytoplasmic; it reads IQLMYVLLVKVPSPLNT. Residues 110–130 constitute an intramembrane region (helical); the sequence is ILVQSPPAIPTIFVMQIVCWI. Residues 131-493 are Cytoplasmic-facing; that stretch reads RGVHLVIDWH…SSSNSKSKKD (363 aa). The tract at residues 462 to 493 is disordered; sequence FIPSSSSSSSSSSSSSSSSSSSSSSNSKSKKD. Residues 465–493 are compositionally biased toward low complexity; that stretch reads SSSSSSSSSSSSSSSSSSSSSSNSKSKKD.

The protein belongs to the glycosyltransferase group 1 family. Glycosyltransferase 33 subfamily.

It is found in the endoplasmic reticulum membrane. The enzyme catalyses an N,N'-diacetylchitobiosyl-diphospho-di-trans,poly-cis-dolichol + GDP-alpha-D-mannose = a beta-D-Man-(1-&gt;4)-beta-D-GlcNAc-(1-&gt;4)-alpha-D-GlcNAc-diphospho-di-trans,poly-cis-dolichol + GDP + H(+). Its pathway is protein modification; protein glycosylation. Functionally, participates in the formation of the lipid-linked precursor oligosaccharide for N-glycosylation. Involved in assembling the dolichol-pyrophosphate-GlcNAc(2)-Man(5) intermediate on the cytoplasmic surface of the ER. The protein is Chitobiosyldiphosphodolichol beta-mannosyltransferase (alg1) of Dictyostelium discoideum (Social amoeba).